Consider the following 419-residue polypeptide: MSGAARAGPARLAALALLTCSLWPTRADNASQEYYTALINVTVQEPGRGTPLTFRIDRGRYGLDSPKAEVRGQVLAPLPIHGVADHLGCDPQTRFFVPPNIKQWIALLQRGNCTFKEKISRAAFHNAVAVVIYNNKSKEEPVTMTHPGTGDIIAVMITELRGKDILSYLEKNISVQMTIAVGTRMPPKNFSRGSLVFVSISFIVLMIISSAWLIFYFIQKIRYTNARDRNQRRLGDAAKKAISKLTTRTVKKGDKETDPDFDHCAVCIESYKQNDVVRVLPCKHVFHKSCVDPWLSEHCTCPMCKLNILKALGIVPNLPCTDNVAFDMERLTRTQAVNRRAALGDLAGDSSLGLEPLRTSGISPLPQDGELTPRTGEINIAVTKEWFIIASFGLLSALTLCYMIIRATASLNANEVEWF.

A signal peptide spans 1–27; the sequence is MSGAARAGPARLAALALLTCSLWPTRA. The Extracellular portion of the chain corresponds to 28 to 194; sequence DNASQEYYTA…MPPKNFSRGS (167 aa). N-linked (GlcNAc...) asparagine glycosylation is found at Asn-29, Asn-40, Asn-112, Asn-135, Asn-172, and Asn-189. The PA domain maps to 105-176; the sequence is IALLQRGNCT…SYLEKNISVQ (72 aa). Residues 195–217 form a helical membrane-spanning segment; the sequence is LVFVSISFIVLMIISSAWLIFYF. The Cytoplasmic portion of the chain corresponds to 218-419; sequence IQKIRYTNAR…SLNANEVEWF (202 aa). The RING-type zinc-finger motif lies at 264-305; it reads CAVCIESYKQNDVVRVLPCKHVFHKSCVDPWLSEHCTCPMCK.

Expression is highest in liver, with lesser amounts in the lung, spleen, brain, heart, kidney and testis.

The protein resides in the membrane. It localises to the cytoplasm. It catalyses the reaction S-ubiquitinyl-[E2 ubiquitin-conjugating enzyme]-L-cysteine + [acceptor protein]-L-lysine = [E2 ubiquitin-conjugating enzyme]-L-cysteine + N(6)-ubiquitinyl-[acceptor protein]-L-lysine.. The protein operates within protein modification; protein ubiquitination. Functionally, acts as an E3 ubiquitin-protein ligase. May have a role during the programmed cell death of hematopoietic cells. The protein is E3 ubiquitin-protein ligase RNF130 of Mus musculus (Mouse).